Here is a 164-residue protein sequence, read N- to C-terminus: 6,7-dimethyl-8-ribityllumazine synthase (164 aa).

5-amino-6-(D-ribitylamino)uracil is bound by residues Phe-28, Ala-62 to Glu-64, and Ala-86 to Ile-88. Glu-91 to Thr-92 serves as a coordination point for (2S)-2-hydroxy-3-oxobutyl phosphate. The active-site Proton donor is the His-94. A 5-amino-6-(D-ribitylamino)uracil-binding site is contributed by Asn-119. Position 133 (Arg-133) interacts with (2S)-2-hydroxy-3-oxobutyl phosphate.

The protein belongs to the DMRL synthase family.

The enzyme catalyses (2S)-2-hydroxy-3-oxobutyl phosphate + 5-amino-6-(D-ribitylamino)uracil = 6,7-dimethyl-8-(1-D-ribityl)lumazine + phosphate + 2 H2O + H(+). It participates in cofactor biosynthesis; riboflavin biosynthesis; riboflavin from 2-hydroxy-3-oxobutyl phosphate and 5-amino-6-(D-ribitylamino)uracil: step 1/2. Its function is as follows. Catalyzes the formation of 6,7-dimethyl-8-ribityllumazine by condensation of 5-amino-6-(D-ribitylamino)uracil with 3,4-dihydroxy-2-butanone 4-phosphate. This is the penultimate step in the biosynthesis of riboflavin. The protein is 6,7-dimethyl-8-ribityllumazine synthase of Nitrosomonas europaea (strain ATCC 19718 / CIP 103999 / KCTC 2705 / NBRC 14298).